The primary structure comprises 506 residues: DNA polymerase type-X family protein pol4 (506 aa).

A BRCT domain is found at 1 to 98 (MKILASSTNY…TPGNPYVIWH (98 aa)). Positions 106–150 (GSPYTPSTRPASHTEAPNDFENHETPNTENNNEVKSIDNVDQEGS) are disordered. The tract at residues 348–357 (RGKPVGADVD) is involved in ssDNA binding. Asp-355, Asp-357, and Asp-419 together coordinate Mg(2+).

It belongs to the DNA polymerase type-X family. Mg(2+) serves as cofactor.

It localises to the cytoplasm. The protein resides in the nucleus. It catalyses the reaction DNA(n) + a 2'-deoxyribonucleoside 5'-triphosphate = DNA(n+1) + diphosphate. Functionally, repair polymerase. Involved in gap-filling in DNA non-homologous end joining (NHEJ) required for double-strand break repair. Can incorporate a ribonucleotide (rNTP) into a primer DNA. This chain is DNA polymerase type-X family protein pol4 (pol4), found in Schizosaccharomyces pombe (strain 972 / ATCC 24843) (Fission yeast).